A 30-amino-acid polypeptide reads, in one-letter code: V-type proton ATPase catalytic subunit A isoform 1 (30 aa).

Belongs to the ATPase alpha/beta chains family. V-ATPase is a heteromultimeric enzyme composed of a peripheral catalytic V1 complex (main components: subunits A, B, C, D, E, and F) attached to an integral membrane V0 proton pore complex (main component: the proteolipid protein).

It carries out the reaction ATP + H2O + 4 H(+)(in) = ADP + phosphate + 5 H(+)(out). In terms of biological role, catalytic subunit of the peripheral V1 complex of vacuolar ATPase. V-ATPase vacuolar ATPase is responsible for acidifying a variety of intracellular compartments in eukaryotic cells. This is V-type proton ATPase catalytic subunit A isoform 1 from Psilotum nudum (Whisk fern).